The chain runs to 454 residues: Bifunctional protein GlmU (454 aa).

The segment at 1-226 (MSLEIVILAA…AMEVQGVNDR (226 aa)) is pyrophosphorylase. Residues 8 to 11 (LAAG), K22, Q73, 78 to 79 (GT), 99 to 101 (YGD), G136, E151, N166, and N224 contribute to the UDP-N-acetyl-alpha-D-glucosamine site. Residue D101 participates in Mg(2+) binding. N224 is a binding site for Mg(2+). The interval 227–247 (MQQAQLERHYQRLRAEELMRQ) is linker. The interval 248 to 454 (GVTLLDPQRL…NWKRPEKIKK (207 aa)) is N-acetyltransferase. UDP-N-acetyl-alpha-D-glucosamine-binding residues include R330 and K348. The active-site Proton acceptor is H360. 2 residues coordinate UDP-N-acetyl-alpha-D-glucosamine: Y363 and N374. Residues A377, 383–384 (NY), S402, A420, and R437 contribute to the acetyl-CoA site.

This sequence in the N-terminal section; belongs to the N-acetylglucosamine-1-phosphate uridyltransferase family. In the C-terminal section; belongs to the transferase hexapeptide repeat family. In terms of assembly, homotrimer. The cofactor is Mg(2+).

Its subcellular location is the cytoplasm. It carries out the reaction alpha-D-glucosamine 1-phosphate + acetyl-CoA = N-acetyl-alpha-D-glucosamine 1-phosphate + CoA + H(+). The enzyme catalyses N-acetyl-alpha-D-glucosamine 1-phosphate + UTP + H(+) = UDP-N-acetyl-alpha-D-glucosamine + diphosphate. It participates in nucleotide-sugar biosynthesis; UDP-N-acetyl-alpha-D-glucosamine biosynthesis; N-acetyl-alpha-D-glucosamine 1-phosphate from alpha-D-glucosamine 6-phosphate (route II): step 2/2. The protein operates within nucleotide-sugar biosynthesis; UDP-N-acetyl-alpha-D-glucosamine biosynthesis; UDP-N-acetyl-alpha-D-glucosamine from N-acetyl-alpha-D-glucosamine 1-phosphate: step 1/1. It functions in the pathway bacterial outer membrane biogenesis; LPS lipid A biosynthesis. Catalyzes the last two sequential reactions in the de novo biosynthetic pathway for UDP-N-acetylglucosamine (UDP-GlcNAc). The C-terminal domain catalyzes the transfer of acetyl group from acetyl coenzyme A to glucosamine-1-phosphate (GlcN-1-P) to produce N-acetylglucosamine-1-phosphate (GlcNAc-1-P), which is converted into UDP-GlcNAc by the transfer of uridine 5-monophosphate (from uridine 5-triphosphate), a reaction catalyzed by the N-terminal domain. In Pseudomonas aeruginosa (strain ATCC 15692 / DSM 22644 / CIP 104116 / JCM 14847 / LMG 12228 / 1C / PRS 101 / PAO1), this protein is Bifunctional protein GlmU.